A 245-amino-acid chain; its full sequence is Aliphatic sulfonates import ATP-binding protein SsuB 2 (245 aa).

The 215-residue stretch at 15–229 (VAVRGLSRAF…DVADPEFARI (215 aa)) folds into the ABC transporter domain. 47-54 (GASGCGKS) provides a ligand contact to ATP.

Belongs to the ABC transporter superfamily. Aliphatic sulfonates importer (TC 3.A.1.17.2) family. The complex is composed of two ATP-binding proteins (SsuB), two transmembrane proteins (SsuC) and a solute-binding protein (SsuA).

It is found in the cell inner membrane. The enzyme catalyses ATP + H2O + aliphatic sulfonate-[sulfonate-binding protein]Side 1 = ADP + phosphate + aliphatic sulfonateSide 2 + [sulfonate-binding protein]Side 1.. Its function is as follows. Part of the ABC transporter complex SsuABC involved in aliphatic sulfonates import. Responsible for energy coupling to the transport system. In Paracoccus denitrificans (strain Pd 1222), this protein is Aliphatic sulfonates import ATP-binding protein SsuB 2.